The following is a 487-amino-acid chain: N-succinylglutamate 5-semialdehyde dehydrogenase (487 aa).

Residue 221–226 (GSSRTG) participates in NAD(+) binding. Residues glutamate 244 and cysteine 278 contribute to the active site.

It belongs to the aldehyde dehydrogenase family. AstD subfamily.

The enzyme catalyses N-succinyl-L-glutamate 5-semialdehyde + NAD(+) + H2O = N-succinyl-L-glutamate + NADH + 2 H(+). It functions in the pathway amino-acid degradation; L-arginine degradation via AST pathway; L-glutamate and succinate from L-arginine: step 4/5. Catalyzes the NAD-dependent reduction of succinylglutamate semialdehyde into succinylglutamate. The sequence is that of N-succinylglutamate 5-semialdehyde dehydrogenase from Pseudomonas putida (strain GB-1).